Consider the following 102-residue polypeptide: Small ribosomal subunit protein uS10 (102 aa).

The protein belongs to the universal ribosomal protein uS10 family. In terms of assembly, part of the 30S ribosomal subunit.

Functionally, involved in the binding of tRNA to the ribosomes. In Methanoculleus marisnigri (strain ATCC 35101 / DSM 1498 / JR1), this protein is Small ribosomal subunit protein uS10.